The primary structure comprises 782 residues: General transcription and DNA repair factor IIH helicase/translocase subunit XPB (782 aa).

Basic and acidic residues predominate over residues 1–11 (MGKRDRADRDK). Disordered regions lie at residues 1–51 (MGKR…ESGT) and 218–241 (SAIS…PQGK). A Nuclear localization signal motif is present at residues 6 to 18 (RADRDKKKSRKRH). Over residues 21-30 (DEEDDEEDAP) the composition is skewed to acidic residues. The span at 218–236 (SAISKTAESSGGPSTSRVT) shows a compositional bias: polar residues. One can recognise a Helicase ATP-binding domain in the interval 327-488 (MFGNGRARSG…DLNFLIGPKL (162 aa)). An ATP-binding site is contributed by 340 to 347 (LPCGAGKS). The short motif at 441 to 444 (DEVH) is the DEVH box element. The Helicase C-terminal domain maps to 542 to 702 (RACQFLIKFH…LAGMEEEDLA (161 aa)). ATP-binding residues include arginine 642 and arginine 645. Phosphoserine is present on serine 686. A Phosphoserine; by CK2 modification is found at serine 751.

It belongs to the helicase family. RAD25/XPB subfamily. As to quaternary structure, component of the 7-subunit TFIIH core complex composed of XPB/ERCC3, XPD/ERCC2, GTF2H1, GTF2H2, GTF2H3, GTF2H4 and GTF2H5, which is active in NER. The core complex associates with the 3-subunit CDK-activating kinase (CAK) module composed of CCNH/cyclin H, CDK7 and MNAT1 to form the 10-subunit holoenzyme (holo-TFIIH) active in transcription. Interacts with PUF60. Interacts with ATF7IP. Interacts with KAT2A; leading to KAT2A recruitment to promoters and acetylation of histones. Part of TBP-based Pol II pre-initiation complex (PIC), in which Pol II core assembles with general transcription factors and other specific initiation factors including GTF2E1, GTF2E2, GTF2F1, GTF2F2, TCEA1, ERCC2, ERCC3, GTF2H2, GTF2H3, GTF2H4, GTF2H5, GTF2A1, GTF2A2, GTF2B and TBP; this large multi-subunit PIC complex mediates DNA unwinding and targets Pol II core to the transcription start site where the first phosphodiester bond forms. In terms of assembly, (Microbial infection) Interacts with Epstein-Barr virus EBNA2. Post-translationally, phosphorylation on Ser-751 by CK2 controls the 5'-excision activity of ERCC1-XPF endonuclease; phosphorylated protein inhibits the excision activity and thus NER. Dephosphorylation reactivates the 5'-excision step. Phosphorylation has no effect on transcription or the 3'-5' helicase activity.

It localises to the nucleus. It catalyses the reaction Couples ATP hydrolysis with the unwinding of duplex DNA by translocating in the 3'-5' direction.. It carries out the reaction ATP + H2O = ADP + phosphate + H(+). Phosphorylation on Ser-751 by CK2 controls the 5'-excision activity of ERCC1-XPF endonuclease; phosphorylated protein inhibits the excision activity and thus NER. ATPase activity is stimulated by TFIIH subunit p52 (GTF2H4). DNA translocase activity by this subunit in TFIIH is stimulated by XPA, ERCC5/XPG and XFP plus ERCC1; translocase activity is sensitive to triptolide which targets this enzyme. In terms of biological role, ATP-dependent 3'-5' DNA helicase/translocase. Binds dsDNA rather than ssDNA, unzipping it in a translocase rather than classical helicase activity. Component of the general transcription and DNA repair factor IIH (TFIIH) core complex. When complexed to CDK-activating kinase (CAK), involved in RNA transcription by RNA polymerase II. The ATPase activity of XPB/ERCC3, but not its helicase activity, is required for DNA opening; it may wrap around the damaged DNA wedging it open, causing localized melting that allows XPD/ERCC2 helicase to anchor. In transcription, TFIIH has an essential role in transcription initiation. When the pre-initiation complex (PIC) has been established, TFIIH is required for promoter opening and promoter escape. The ATP-dependent helicase activity of XPB/ERCC3 is required for promoter opening and promoter escape. In transcription pre-initiation complexes induces and propagates a DNA twist to open DNA. Also involved in transcription-coupled nucleotide excision repair (NER) of damaged DNA. In NER, TFIIH acts by opening DNA around the lesion to allow the excision of the damaged oligonucleotide and its replacement by a new DNA fragment. The structure of the TFIIH transcription complex differs from the NER-TFIIH complex; large movements by XPD/ERCC2 and XPB/ERCC3 are stabilized by XPA. XPA retains XPB/ERCC3 at the 5' end of a DNA bubble (mimicking DNA damage). The protein is General transcription and DNA repair factor IIH helicase/translocase subunit XPB of Homo sapiens (Human).